Here is an 84-residue protein sequence, read N- to C-terminus: Putative glutaredoxin MT3292 (84 aa).

The Glutaredoxin domain maps to 1–84; it reads MITAALTIYT…VKAKLVKIAG (84 aa).

This is Putative glutaredoxin MT3292 from Mycobacterium tuberculosis (strain CDC 1551 / Oshkosh).